Reading from the N-terminus, the 271-residue chain is Phosphate import ATP-binding protein PstB (271 aa).

One can recognise an ABC transporter domain in the interval 13–266 (VRTAPVSEAE…PKHPYTEAYI (254 aa)). 57–64 (GPSGCGKS) provides a ligand contact to ATP.

The protein belongs to the ABC transporter superfamily. Phosphate importer (TC 3.A.1.7) family. In terms of assembly, the complex is composed of two ATP-binding proteins (PstB), two transmembrane proteins (PstC and PstA) and a solute-binding protein (PstS).

Its subcellular location is the cell inner membrane. It catalyses the reaction phosphate(out) + ATP + H2O = ADP + 2 phosphate(in) + H(+). Functionally, part of the ABC transporter complex PstSACB involved in phosphate import. Responsible for energy coupling to the transport system. This is Phosphate import ATP-binding protein PstB from Thermus thermophilus (strain ATCC 27634 / DSM 579 / HB8).